We begin with the raw amino-acid sequence, 465 residues long: GTPase Der (465 aa).

2 EngA-type G domains span residues 3 to 167 (PLVA…PERS) and 179 to 352 (IHIA…VSAL). GTP-binding positions include 9–16 (GRPNVGKS), 57–61 (DTGGM), 119–122 (NKID), 185–192 (GRPNVGKS), 232–236 (DTAGL), and 297–300 (NKWD). Residues 353–437 (RQFSTSEVNK…PVRFLFREGD (85 aa)) form the KH-like domain.

Belongs to the TRAFAC class TrmE-Era-EngA-EngB-Septin-like GTPase superfamily. EngA (Der) GTPase family. As to quaternary structure, associates with the 50S ribosomal subunit.

Its function is as follows. GTPase that plays an essential role in the late steps of ribosome biogenesis. The protein is GTPase Der of Xylella fastidiosa (strain M12).